A 353-amino-acid chain; its full sequence is S-adenosylmethionine:tRNA ribosyltransferase-isomerase (353 aa).

It belongs to the QueA family. In terms of assembly, monomer.

It is found in the cytoplasm. The catalysed reaction is 7-aminomethyl-7-carbaguanosine(34) in tRNA + S-adenosyl-L-methionine = epoxyqueuosine(34) in tRNA + adenine + L-methionine + 2 H(+). The protein operates within tRNA modification; tRNA-queuosine biosynthesis. Transfers and isomerizes the ribose moiety from AdoMet to the 7-aminomethyl group of 7-deazaguanine (preQ1-tRNA) to give epoxyqueuosine (oQ-tRNA). In Cupriavidus metallidurans (strain ATCC 43123 / DSM 2839 / NBRC 102507 / CH34) (Ralstonia metallidurans), this protein is S-adenosylmethionine:tRNA ribosyltransferase-isomerase.